A 311-amino-acid polypeptide reads, in one-letter code: Aspartate carbamoyltransferase catalytic subunit (311 aa).

Carbamoyl phosphate is bound by residues Arg55 and Thr56. Lys85 serves as a coordination point for L-aspartate. Carbamoyl phosphate contacts are provided by Arg106, His135, and Gln138. 2 residues coordinate L-aspartate: Arg168 and Arg230. Residues Leu268 and Pro269 each coordinate carbamoyl phosphate.

This sequence belongs to the aspartate/ornithine carbamoyltransferase superfamily. ATCase family. Heterododecamer (2C3:3R2) of six catalytic PyrB chains organized as two trimers (C3), and six regulatory PyrI chains organized as three dimers (R2).

The enzyme catalyses carbamoyl phosphate + L-aspartate = N-carbamoyl-L-aspartate + phosphate + H(+). The protein operates within pyrimidine metabolism; UMP biosynthesis via de novo pathway; (S)-dihydroorotate from bicarbonate: step 2/3. Functionally, catalyzes the condensation of carbamoyl phosphate and aspartate to form carbamoyl aspartate and inorganic phosphate, the committed step in the de novo pyrimidine nucleotide biosynthesis pathway. This Baumannia cicadellinicola subsp. Homalodisca coagulata protein is Aspartate carbamoyltransferase catalytic subunit.